A 498-amino-acid polypeptide reads, in one-letter code: Glycerol kinase (498 aa).

Thr11 lines the ADP pocket. ATP-binding residues include Thr11, Ser12, and Ser13. Sn-glycerol 3-phosphate is bound at residue Thr11. Position 15 (Arg15) interacts with ADP. Sn-glycerol 3-phosphate-binding residues include Arg81, Glu82, Tyr133, and Asp242. Positions 81, 82, 133, 242, and 243 each coordinate glycerol. The ADP site is built by Thr264 and Gly307. ATP-binding residues include Thr264, Gly307, Gln311, and Gly412. Residues Gly412 and Asn416 each contribute to the ADP site.

This sequence belongs to the FGGY kinase family.

The enzyme catalyses glycerol + ATP = sn-glycerol 3-phosphate + ADP + H(+). It participates in polyol metabolism; glycerol degradation via glycerol kinase pathway; sn-glycerol 3-phosphate from glycerol: step 1/1. With respect to regulation, inhibited by fructose 1,6-bisphosphate (FBP). In terms of biological role, key enzyme in the regulation of glycerol uptake and metabolism. Catalyzes the phosphorylation of glycerol to yield sn-glycerol 3-phosphate. This is Glycerol kinase from Acidovorax ebreus (strain TPSY) (Diaphorobacter sp. (strain TPSY)).